Reading from the N-terminus, the 424-residue chain is UDP-glycosyltransferase 76H1 (424 aa).

UDP-alpha-D-glucose is bound by residues serine 248, 306–307 (WA), 324–332 (HCGWNSTIE), and 346–349 (FADQ).

This sequence belongs to the UDP-glycosyltransferase family.

In terms of biological role, may glycosylate diterpenes or flavonols in leaves. The polypeptide is UDP-glycosyltransferase 76H1 (Stevia rebaudiana (Stevia)).